The sequence spans 646 residues: Stage V sporulation protein D (646 aa).

The active-site Acyl-ester intermediate is serine 294. A PASTA domain is found at 580 to 638 (DTKTIEVPNVVGMSVSDLESLLVNLNVDASGKGSKIVKQSPAAGTKVKEGSKIRVYLTE).

The protein belongs to the transpeptidase family.

It is found in the cell membrane. The catalysed reaction is Preferential cleavage: (Ac)2-L-Lys-D-Ala-|-D-Ala. Also transpeptidation of peptidyl-alanyl moieties that are N-acyl substituents of D-alanine.. It functions in the pathway cell wall biogenesis; peptidoglycan biosynthesis. Penicillin-binding protein with an unknown catalytic activity. May have a specialized role in the morphogenesis of spore cortex, which is a modified form of peptidoglycan. Spore cortex formation is determined primarily by the mother cell. The protein is Stage V sporulation protein D (spoVD) of Bacillus subtilis (strain 168).